Consider the following 178-residue polypeptide: Ribosome maturation factor RimP (178 aa).

The protein belongs to the RimP family.

It localises to the cytoplasm. Functionally, required for maturation of 30S ribosomal subunits. The sequence is that of Ribosome maturation factor RimP from Corynebacterium glutamicum (strain ATCC 13032 / DSM 20300 / JCM 1318 / BCRC 11384 / CCUG 27702 / LMG 3730 / NBRC 12168 / NCIMB 10025 / NRRL B-2784 / 534).